A 643-amino-acid chain; its full sequence is Phosphomethylpyrimidine synthase (643 aa).

Residues Asn-248, Met-277, Tyr-306, His-342, 362 to 364 (SRG), 403 to 406 (DGLR), and Glu-442 contribute to the substrate site. His-446 is a Zn(2+) binding site. Tyr-469 is a binding site for substrate. Position 510 (His-510) interacts with Zn(2+). [4Fe-4S] cluster-binding residues include Cys-590, Cys-593, and Cys-598.

The protein belongs to the ThiC family. In terms of assembly, homodimer. [4Fe-4S] cluster serves as cofactor.

It catalyses the reaction 5-amino-1-(5-phospho-beta-D-ribosyl)imidazole + S-adenosyl-L-methionine = 4-amino-2-methyl-5-(phosphooxymethyl)pyrimidine + CO + 5'-deoxyadenosine + formate + L-methionine + 3 H(+). It participates in cofactor biosynthesis; thiamine diphosphate biosynthesis. Catalyzes the synthesis of the hydroxymethylpyrimidine phosphate (HMP-P) moiety of thiamine from aminoimidazole ribotide (AIR) in a radical S-adenosyl-L-methionine (SAM)-dependent reaction. This chain is Phosphomethylpyrimidine synthase, found in Burkholderia ambifaria (strain MC40-6).